The following is a 311-amino-acid chain: Probable manganese-dependent inorganic pyrophosphatase (311 aa).

His-9, Asp-13, Asp-15, Asp-75, His-97, and Asp-149 together coordinate Mn(2+).

Belongs to the PPase class C family. Mn(2+) is required as a cofactor.

It is found in the cytoplasm. It catalyses the reaction diphosphate + H2O = 2 phosphate + H(+). This Lactobacillus acidophilus (strain ATCC 700396 / NCK56 / N2 / NCFM) protein is Probable manganese-dependent inorganic pyrophosphatase.